The chain runs to 950 residues: RNA polymerase-associated protein RapA (950 aa).

In terms of domain architecture, Helicase ATP-binding spans 165–333; sequence EVADRMAPRV…FARLRLLDPN (169 aa). 178 to 185 provides a ligand contact to ATP; sequence DEVGLGKT. A DEAH box motif is present at residues 279–282; that stretch reads DEAH. The 155-residue stretch at 475–629 folds into the Helicase C-terminal domain; the sequence is RVEWLIDTLK…TCPTGNALQH (155 aa).

The protein belongs to the SNF2/RAD54 helicase family. RapA subfamily. As to quaternary structure, interacts with the RNAP. Has a higher affinity for the core RNAP than for the holoenzyme. Its ATPase activity is stimulated by binding to RNAP.

Its function is as follows. Transcription regulator that activates transcription by stimulating RNA polymerase (RNAP) recycling in case of stress conditions such as supercoiled DNA or high salt concentrations. Probably acts by releasing the RNAP, when it is trapped or immobilized on tightly supercoiled DNA. Does not activate transcription on linear DNA. Probably not involved in DNA repair. In Pseudomonas aeruginosa (strain LESB58), this protein is RNA polymerase-associated protein RapA.